The primary structure comprises 426 residues: Colanic acid biosynthesis protein WcaK (426 aa).

Belongs to the polysaccharide pyruvyl transferase family.

The protein operates within slime biogenesis; slime polysaccharide biosynthesis. The chain is Colanic acid biosynthesis protein WcaK (wcaK) from Escherichia coli (strain K12).